We begin with the raw amino-acid sequence, 337 residues long: Diacylglycerol O-acyltransferase 2-like protein 6 (337 aa).

2 helical membrane-spanning segments follow: residues 22–42 (IPVY…FLLF) and 102–122 (YIIA…NFAT).

Belongs to the diacylglycerol acyltransferase family. As to expression, expressed in all tissues tested except pancreas.

Its subcellular location is the endoplasmic reticulum membrane. The enzyme catalyses 1,2-di-(9Z-octadecenoyl)-sn-glycerol + (9Z)-octadecenoyl-CoA = 1,2,3-tri-(9Z-octadecenoyl)-glycerol + CoA. It catalyses the reaction 1-O-(9Z-octadecenyl)-glycerol + (9Z)-octadecenoyl-CoA = 1-O-(9Z-octadecyl)-3-(9Z-octadecenoyl)-glycerol + CoA. It carries out the reaction 1-(9Z-octadecenoyl)-glycerol + (9Z)-octadecenoyl-CoA = 1,2-di-(9Z-octadecenoyl)-glycerol + CoA. Functionally, diglyceride acyltransferase that uses fatty acyl-CoA as substrate. Particularly active with oleate as a substrate. Has no wax synthase activity to produce wax esters. Able to use 1-monoalkylglycerol (1-MAkG) as an acyl acceptor for the synthesis of monoalkyl-monoacylglycerol (MAMAG). The polypeptide is Diacylglycerol O-acyltransferase 2-like protein 6 (Homo sapiens (Human)).